Reading from the N-terminus, the 193-residue chain is Ion-translocating oxidoreductase complex subunit A (193 aa).

Helical transmembrane passes span 5–25 (FLLFVGTVLVNNFVLVKFLGL), 39–59 (IGMGFATTFVMTLASVCSWLV), 62–82 (FILLPLDLIYLRTLSFILVIA), 102–122 (LLGIFLPLITTNCAVLGVALL), 134–154 (AIYGFGAAAGFSLVMVLFAAI), and 171–191 (SIGLITAGLMSLAFMGFSGLV).

The protein belongs to the NqrDE/RnfAE family. In terms of assembly, the complex is composed of six subunits: RnfA, RnfB, RnfC, RnfD, RnfE and RnfG.

The protein resides in the cell inner membrane. Its function is as follows. Part of a membrane-bound complex that couples electron transfer with translocation of ions across the membrane. The polypeptide is Ion-translocating oxidoreductase complex subunit A (Photorhabdus laumondii subsp. laumondii (strain DSM 15139 / CIP 105565 / TT01) (Photorhabdus luminescens subsp. laumondii)).